The chain runs to 281 residues: Hexaprenyl pyrophosphate synthase (281 aa).

Isopentenyl diphosphate is bound by residues lysine 42, arginine 45, and histidine 74. Residues aspartate 81 and aspartate 85 each contribute to the Mg(2+) site. An isopentenyl diphosphate-binding site is contributed by arginine 91.

Belongs to the FPP/GGPP synthase family. Homodimer. Requires Mg(2+) as cofactor.

It catalyses the reaction 2 isopentenyl diphosphate + (2E,6E,10E)-geranylgeranyl diphosphate = all-trans-hexaprenyl diphosphate + 2 diphosphate. Functionally, catalyzes consecutive E-type condensation of two isopentenyl pyrophosphate (IPP) molecules with an allylic substrate such as geranylgeranyl diphosphate (GGPP), farnesyl diphosphate (FPP) or geranyl diphosphate (GPP) to yield the medium-chain product trans-C30-hexaprenyl pyrophosphate (HexPP). GGPP is the physiological substrate. The chain is Hexaprenyl pyrophosphate synthase (gdS-2) from Saccharolobus solfataricus (strain ATCC 35092 / DSM 1617 / JCM 11322 / P2) (Sulfolobus solfataricus).